Here is a 193-residue protein sequence, read N- to C-terminus: 3-isopropylmalate dehydratase small subunit (193 aa).

This sequence belongs to the LeuD family. LeuD type 1 subfamily. As to quaternary structure, heterodimer of LeuC and LeuD.

It carries out the reaction (2R,3S)-3-isopropylmalate = (2S)-2-isopropylmalate. The protein operates within amino-acid biosynthesis; L-leucine biosynthesis; L-leucine from 3-methyl-2-oxobutanoate: step 2/4. Catalyzes the isomerization between 2-isopropylmalate and 3-isopropylmalate, via the formation of 2-isopropylmaleate. The sequence is that of 3-isopropylmalate dehydratase small subunit from Bacillus cereus (strain ZK / E33L).